Consider the following 161-residue polypeptide: MIDAEGYRPNVGIILCNPQGEVFWARRIGQDSWQFPQGGIKKDESPEEALFRELKEEVGLPPEAVEIVAGTRGWLRYRLPKKMIRYDSHPVCVGQKQKWFMLQLLADESEICTNYTDKPEFDGWRWVSYWYPLGQVVSFKREVYRRAMREFAPVLFKREES.

A Nudix hydrolase domain is found at 6 to 149 (GYRPNVGIIL…KREVYRRAMR (144 aa)). The Nudix box signature appears at 38 to 59 (GGIKKDESPEEALFRELKEEVG).

The protein belongs to the Nudix hydrolase family. RppH subfamily. Requires a divalent metal cation as cofactor.

In terms of biological role, accelerates the degradation of transcripts by removing pyrophosphate from the 5'-end of triphosphorylated RNA, leading to a more labile monophosphorylated state that can stimulate subsequent ribonuclease cleavage. The chain is RNA pyrophosphohydrolase from Hahella chejuensis (strain KCTC 2396).